We begin with the raw amino-acid sequence, 404 residues long: Glucose-1-phosphate adenylyltransferase (404 aa).

Alpha-D-glucose 1-phosphate-binding positions include tyrosine 99, glycine 164, 179–180, and serine 197; that span reads EK.

The protein belongs to the bacterial/plant glucose-1-phosphate adenylyltransferase family.

It carries out the reaction alpha-D-glucose 1-phosphate + ATP + H(+) = ADP-alpha-D-glucose + diphosphate. It functions in the pathway glycan biosynthesis; glycogen biosynthesis. Functionally, involved in the biosynthesis of ADP-glucose, a building block, required in the biosynthesis of maltose-1-phosphate (M1P) and in the elongation reactions to produce linear alpha-1,4-glucans. Catalyzes the reaction between ATP and alpha-D-glucose 1-phosphate (G1P) to produce pyrophosphate and ADP-Glc. The polypeptide is Glucose-1-phosphate adenylyltransferase (Mycolicibacterium gilvum (strain PYR-GCK) (Mycobacterium gilvum (strain PYR-GCK))).